Consider the following 552-residue polypeptide: Sensor histidine kinase DpiB (552 aa).

Residues Met-1 to Arg-21 lie on the Cytoplasmic side of the membrane. A helical membrane pass occupies residues Ile-22–Thr-42. Over Ala-43 to Pro-182 the chain is Periplasmic. A helical membrane pass occupies residues Met-183–Ala-203. Topologically, residues His-204–Arg-552 are cytoplasmic. One can recognise a PAS domain in the interval Arg-222–Ala-292. In terms of domain architecture, Histidine kinase spans Thr-344 to Lys-541. A Phosphohistidine; by autocatalysis modification is found at His-347.

Autophosphorylated.

The protein resides in the cell inner membrane. The catalysed reaction is ATP + protein L-histidine = ADP + protein N-phospho-L-histidine.. With respect to regulation, autophosphorylation is induced in vitro by dithiothreitol (DTT). Member of the two-component regulatory system DpiA/DpiB, which is essential for expression of citrate-specific fermentation genes and genes involved in plasmid inheritance. Could be involved in response to both the presence of citrate and external redox conditions. Functions as a sensor kinase that phosphorylates DpiA in the presence of citrate. The protein is Sensor histidine kinase DpiB (dpiB) of Escherichia coli (strain K12).